Here is a 337-residue protein sequence, read N- to C-terminus: Large ribosomal subunit protein uL3 (337 aa).

The tract at residues 1–29 is disordered; sequence MARHHQPRKGSVAFSPRKRAARETPRVKS.

Belongs to the universal ribosomal protein uL3 family. As to quaternary structure, part of the 50S ribosomal subunit. Forms a cluster with proteins L14 and L24e.

One of the primary rRNA binding proteins, it binds directly near the 3'-end of the 23S rRNA, where it nucleates assembly of the 50S subunit. The polypeptide is Large ribosomal subunit protein uL3 (Methanothermobacter thermautotrophicus (strain ATCC 29096 / DSM 1053 / JCM 10044 / NBRC 100330 / Delta H) (Methanobacterium thermoautotrophicum)).